The chain runs to 644 residues: Archaeal Lon protease (644 aa).

A compositionally biased stretch (polar residues) spans 1–18; that stretch reads MKTTIKNSRTQESVSYEG. The segment at 1-30 is disordered; sequence MKTTIKNSRTQESVSYEGNETKKGTGETLS. Over 1–137 the chain is Cytoplasmic; that stretch reads MKTTIKNSRT…KARSQDEKKN (137 aa). 71–78 contributes to the ATP binding site; that stretch reads GEPGVGKS. The next 2 membrane-spanning stretches (helical) occupy residues 138-155 and 156-171; these read LFMMLIISFILVLGFMMN and QFLAAIIAAGIIFLAL. Residues 172-644 lie on the Cytoplasmic side of the membrane; it reads QQFRPRTTVM…PSIMKKPAMH (473 aa). The Lon proteolytic domain maps to 438 to 617; the sequence is GGEVGRVNGL…GDVLEHALIG (180 aa). Catalysis depends on residues Ser524 and Lys567.

It belongs to the peptidase S16 family. Archaeal LonB subfamily. As to quaternary structure, homohexamer. Organized in a ring with a central cavity.

It is found in the cell membrane. Functionally, ATP-dependent serine protease that mediates the selective degradation of mutant and abnormal proteins as well as certain short-lived regulatory proteins. Degrades polypeptides processively. This Methanothermobacter thermautotrophicus (strain ATCC 29096 / DSM 1053 / JCM 10044 / NBRC 100330 / Delta H) (Methanobacterium thermoautotrophicum) protein is Archaeal Lon protease.